Here is a 1070-residue protein sequence, read N- to C-terminus: Carbamoyl phosphate synthase large chain (1070 aa).

The carboxyphosphate synthetic domain stretch occupies residues 1-401; that stretch reads MPKRDDIKTI…ALLKAVRSLE (401 aa). ATP is bound by residues R129, R169, G175, G176, K208, I210, E215, G241, I242, H243, Q284, and E298. Residues 133–327 form the ATP-grasp 1 domain; that stretch reads RDLMNELGEP…IAKLAAKIAV (195 aa). Mg(2+) contacts are provided by Q284, E298, and N300. Q284, E298, and N300 together coordinate Mn(2+). The tract at residues 402-546 is oligomerization domain; that stretch reads IGADHLLLEE…YSTYEDENES (145 aa). The interval 547–929 is carbamoyl phosphate synthetic domain; the sequence is IRSSKESVIV…ALYKGFVASG (383 aa). The ATP-grasp 2 domain occupies 671-861; it reads EKALEILQIP…MANVATRVIL (191 aa). ATP-binding residues include R707, R746, V748, E752, G777, V778, H779, S780, Q820, and E832. Residues Q820, E832, and N834 each contribute to the Mg(2+) site. Mn(2+) contacts are provided by Q820, E832, and N834. One can recognise an MGS-like domain in the interval 930–1070; that stretch reads TTMHDYGTVL…SEVKQPKARV (141 aa). Residues 930-1070 are allosteric domain; sequence TTMHDYGTVL…SEVKQPKARV (141 aa).

It belongs to the CarB family. In terms of assembly, composed of two chains; the small (or glutamine) chain promotes the hydrolysis of glutamine to ammonia, which is used by the large (or ammonia) chain to synthesize carbamoyl phosphate. Tetramer of heterodimers (alpha,beta)4. Requires Mg(2+) as cofactor. The cofactor is Mn(2+).

It carries out the reaction hydrogencarbonate + L-glutamine + 2 ATP + H2O = carbamoyl phosphate + L-glutamate + 2 ADP + phosphate + 2 H(+). The enzyme catalyses hydrogencarbonate + NH4(+) + 2 ATP = carbamoyl phosphate + 2 ADP + phosphate + 2 H(+). It participates in amino-acid biosynthesis; L-arginine biosynthesis; carbamoyl phosphate from bicarbonate: step 1/1. The protein operates within pyrimidine metabolism; UMP biosynthesis via de novo pathway; (S)-dihydroorotate from bicarbonate: step 1/3. In terms of biological role, large subunit of the glutamine-dependent carbamoyl phosphate synthetase (CPSase). CPSase catalyzes the formation of carbamoyl phosphate from the ammonia moiety of glutamine, carbonate, and phosphate donated by ATP, constituting the first step of 2 biosynthetic pathways, one leading to arginine and/or urea and the other to pyrimidine nucleotides. The large subunit (synthetase) binds the substrates ammonia (free or transferred from glutamine from the small subunit), hydrogencarbonate and ATP and carries out an ATP-coupled ligase reaction, activating hydrogencarbonate by forming carboxy phosphate which reacts with ammonia to form carbamoyl phosphate. This chain is Carbamoyl phosphate synthase large chain, found in Listeria innocua serovar 6a (strain ATCC BAA-680 / CLIP 11262).